A 362-amino-acid polypeptide reads, in one-letter code: Holliday junction branch migration complex subunit RuvB (362 aa).

The disordered stretch occupies residues 1–27 (MANIEKTEFHVPAPVSAAGNQKSSLGN). The interval 13–206 (APVSAAGNQK…FGFTAQMEFY (194 aa)) is large ATPase domain (RuvB-L). Residues Leu-45, Arg-46, Gly-87, Lys-90, Thr-91, Thr-92, 153-155 (EDF), Arg-196, Tyr-206, and Arg-243 contribute to the ATP site. Thr-91 contributes to the Mg(2+) binding site. Residues 207-277 (EVEDLTKVVV…AAQAALVVFD (71 aa)) are small ATPAse domain (RuvB-S). A head domain (RuvB-H) region spans residues 280 to 362 (EMGLDRLDRA…EPPEGIIGSL (83 aa)). DNA is bound by residues Arg-335 and Arg-340.

The protein belongs to the RuvB family. Homohexamer. Forms an RuvA(8)-RuvB(12)-Holliday junction (HJ) complex. HJ DNA is sandwiched between 2 RuvA tetramers; dsDNA enters through RuvA and exits via RuvB. An RuvB hexamer assembles on each DNA strand where it exits the tetramer. Each RuvB hexamer is contacted by two RuvA subunits (via domain III) on 2 adjacent RuvB subunits; this complex drives branch migration. In the full resolvosome a probable DNA-RuvA(4)-RuvB(12)-RuvC(2) complex forms which resolves the HJ.

It localises to the cytoplasm. It carries out the reaction ATP + H2O = ADP + phosphate + H(+). In terms of biological role, the RuvA-RuvB-RuvC complex processes Holliday junction (HJ) DNA during genetic recombination and DNA repair, while the RuvA-RuvB complex plays an important role in the rescue of blocked DNA replication forks via replication fork reversal (RFR). RuvA specifically binds to HJ cruciform DNA, conferring on it an open structure. The RuvB hexamer acts as an ATP-dependent pump, pulling dsDNA into and through the RuvAB complex. RuvB forms 2 homohexamers on either side of HJ DNA bound by 1 or 2 RuvA tetramers; 4 subunits per hexamer contact DNA at a time. Coordinated motions by a converter formed by DNA-disengaged RuvB subunits stimulates ATP hydrolysis and nucleotide exchange. Immobilization of the converter enables RuvB to convert the ATP-contained energy into a lever motion, pulling 2 nucleotides of DNA out of the RuvA tetramer per ATP hydrolyzed, thus driving DNA branch migration. The RuvB motors rotate together with the DNA substrate, which together with the progressing nucleotide cycle form the mechanistic basis for DNA recombination by continuous HJ branch migration. Branch migration allows RuvC to scan DNA until it finds its consensus sequence, where it cleaves and resolves cruciform DNA. The polypeptide is Holliday junction branch migration complex subunit RuvB (Corynebacterium diphtheriae (strain ATCC 700971 / NCTC 13129 / Biotype gravis)).